Reading from the N-terminus, the 126-residue chain is Histone H2B 7 (126 aa).

Positions 1-12 (MPEPAKSAPAPK) are enriched in low complexity. The interval 1–35 (MPEPAKSAPAPKKGSKKAVTKTQKKGDKKRKRARK) is disordered. An N6-acetyllysine mark is found at lysine 6 and lysine 13. Positions 13–34 (KGSKKAVTKTQKKGDKKRKRAR) are enriched in basic residues. Serine 15 carries the post-translational modification Phosphoserine. An N6-acetyllysine mark is found at lysine 16 and lysine 21. O-linked (GlcNAc) serine glycosylation occurs at serine 113. Residue lysine 121 forms a Glycyl lysine isopeptide (Lys-Gly) (interchain with G-Cter in ubiquitin) linkage.

The protein belongs to the histone H2B family. In terms of assembly, the nucleosome is a histone octamer containing two molecules each of H2A, H2B, H3 and H4 assembled in one H3-H4 heterotetramer and two H2A-H2B heterodimers. The octamer wraps approximately 147 bp of DNA. Post-translationally, monoubiquitination of Lys-121 by the BRE1 gives a specific tag for epigenetic transcriptional activation and is also prerequisite for histone H3 'Lys-4' and 'Lys-79' methylation. Phosphorylated on Ser-15 during apoptosis; which facilitates apoptotic chromatin condensation. In terms of processing, glcNAcylation at Ser-113 promotes monoubiquitination of Lys-121. It fluctuates in response to extracellular glucose, and associates with transcribed genes.

The protein localises to the nucleus. The protein resides in the chromosome. Functionally, core component of nucleosome. Nucleosomes wrap and compact DNA into chromatin, limiting DNA accessibility to the cellular machineries which require DNA as a template. Histones thereby play a central role in transcription regulation, DNA repair, DNA replication and chromosomal stability. DNA accessibility is regulated via a complex set of post-translational modifications of histones, also called histone code, and nucleosome remodeling. The sequence is that of Histone H2B 7 (H2B-VII) from Gallus gallus (Chicken).